We begin with the raw amino-acid sequence, 462 residues long: Ribosomal protein uS12 methylthiotransferase RimO (462 aa).

Residues 22 to 133 (ASVAFLHLGC…IIEVLQRVRQ (112 aa)) form the MTTase N-terminal domain. Positions 31, 67, 96, 171, 175, and 178 each coordinate [4Fe-4S] cluster. The Radical SAM core domain maps to 157–386 (TTGRFVSYLK…VAIQQPISAA (230 aa)). The 72-residue stretch at 389 to 460 (QALIGQTVDV…LYDLTGEINH (72 aa)) folds into the TRAM domain.

The protein belongs to the methylthiotransferase family. RimO subfamily. It depends on [4Fe-4S] cluster as a cofactor.

It is found in the cytoplasm. It carries out the reaction L-aspartate(89)-[ribosomal protein uS12]-hydrogen + (sulfur carrier)-SH + AH2 + 2 S-adenosyl-L-methionine = 3-methylsulfanyl-L-aspartate(89)-[ribosomal protein uS12]-hydrogen + (sulfur carrier)-H + 5'-deoxyadenosine + L-methionine + A + S-adenosyl-L-homocysteine + 2 H(+). Its function is as follows. Catalyzes the methylthiolation of an aspartic acid residue of ribosomal protein uS12. In Prochlorococcus marinus (strain MIT 9211), this protein is Ribosomal protein uS12 methylthiotransferase RimO.